Reading from the N-terminus, the 484-residue chain is ATP synthase subunit beta (484 aa).

ATP is bound at residue 169 to 176; the sequence is GGAGVGKT.

The protein belongs to the ATPase alpha/beta chains family. In terms of assembly, F-type ATPases have 2 components, CF(1) - the catalytic core - and CF(0) - the membrane proton channel. CF(1) has five subunits: alpha(3), beta(3), gamma(1), delta(1), epsilon(1). CF(0) has three main subunits: a(1), b(2) and c(9-12). The alpha and beta chains form an alternating ring which encloses part of the gamma chain. CF(1) is attached to CF(0) by a central stalk formed by the gamma and epsilon chains, while a peripheral stalk is formed by the delta and b chains.

It is found in the cell membrane. The enzyme catalyses ATP + H2O + 4 H(+)(in) = ADP + phosphate + 5 H(+)(out). Produces ATP from ADP in the presence of a proton gradient across the membrane. The catalytic sites are hosted primarily by the beta subunits. The protein is ATP synthase subunit beta of Nocardioides sp. (strain ATCC BAA-499 / JS614).